The primary structure comprises 58 residues: Large ribosomal subunit protein eL37 (58 aa).

Residues 1 to 17 are compositionally biased toward polar residues; that stretch reads MTGAGTPSQGKKNTTTH. The segment at 1-26 is disordered; the sequence is MTGAGTPSQGKKNTTTHTKCRRCGEK. Positions 20, 23, 35, and 38 each coordinate Zn(2+). The C4-type zinc finger occupies 20–38; the sequence is CRRCGEKSYHTKKKVCSSC.

Belongs to the eukaryotic ribosomal protein eL37 family. Zn(2+) is required as a cofactor.

Binds to the 23S rRNA. This chain is Large ribosomal subunit protein eL37, found in Halobacterium salinarum (strain ATCC 29341 / DSM 671 / R1).